The primary structure comprises 504 residues: Lysine--tRNA ligase (504 aa).

Residues glutamate 404 and glutamate 411 each coordinate Mg(2+).

The protein belongs to the class-II aminoacyl-tRNA synthetase family. As to quaternary structure, homodimer. Mg(2+) serves as cofactor.

The protein localises to the cytoplasm. The catalysed reaction is tRNA(Lys) + L-lysine + ATP = L-lysyl-tRNA(Lys) + AMP + diphosphate. This chain is Lysine--tRNA ligase, found in Aliarcobacter butzleri (strain RM4018) (Arcobacter butzleri).